The sequence spans 195 residues: Probable GTP-binding protein EngB (195 aa).

The EngB-type G domain occupies 24–195 (GLSEVALSGR…QIWDLIANYL (172 aa)). GTP contacts are provided by residues 32–39 (GRSNVGKS), 59–63 (GKTQT), 77–80 (DVPG), 144–147 (TKED), and 176–178 (YSS). Residues Ser-39 and Thr-61 each coordinate Mg(2+).

This sequence belongs to the TRAFAC class TrmE-Era-EngA-EngB-Septin-like GTPase superfamily. EngB GTPase family. Mg(2+) is required as a cofactor.

In terms of biological role, necessary for normal cell division and for the maintenance of normal septation. The polypeptide is Probable GTP-binding protein EngB (Staphylococcus haemolyticus (strain JCSC1435)).